A 380-amino-acid chain; its full sequence is Cytochrome b (380 aa).

The next 4 helical transmembrane spans lie at phenylalanine 34–methionine 54, tryptophan 78–isoleucine 99, tryptophan 114–leucine 134, and phenylalanine 179–threonine 199. Histidine 84 and histidine 98 together coordinate heme b. Histidine 183 and histidine 197 together coordinate heme b. An a ubiquinone-binding site is contributed by histidine 202. Transmembrane regions (helical) follow at residues leucine 227–serine 247, leucine 289–histidine 309, leucine 321–serine 341, and phenylalanine 348–proline 368.

This sequence belongs to the cytochrome b family. The cytochrome bc1 complex contains 11 subunits: 3 respiratory subunits (MT-CYB, CYC1 and UQCRFS1), 2 core proteins (UQCRC1 and UQCRC2) and 6 low-molecular weight proteins (UQCRH/QCR6, UQCRB/QCR7, UQCRQ/QCR8, UQCR10/QCR9, UQCR11/QCR10 and a cleavage product of UQCRFS1). This cytochrome bc1 complex then forms a dimer. Requires heme b as cofactor.

Its subcellular location is the mitochondrion inner membrane. Its function is as follows. Component of the ubiquinol-cytochrome c reductase complex (complex III or cytochrome b-c1 complex) that is part of the mitochondrial respiratory chain. The b-c1 complex mediates electron transfer from ubiquinol to cytochrome c. Contributes to the generation of a proton gradient across the mitochondrial membrane that is then used for ATP synthesis. This Oceanodroma microsoma (Least storm petrel) protein is Cytochrome b (MT-CYB).